The primary structure comprises 874 residues: Rho GTPase-activating protein 42 (874 aa).

The 256-residue stretch at 7 to 262 folds into the BAR domain; sequence EFSDSYLDSP…MKSANQDYRP (256 aa). A coiled-coil region spans residues 225–261; it reads KQQLQFNLQNTRNNFESTRQEVERLMQRMKSANQDYR. Residues 265-374 enclose the PH domain; it reads QWTMEGYLYV…WLEAMDGKEP (110 aa). Residue tyrosine 376 is modified to Phosphotyrosine. Residues 376 to 572 enclose the Rho-GAP domain; it reads YTLPAIISKK…ILIEHYEKIF (197 aa). The interval 575–720 is disordered; it reads APDPSIPLPQ…GDVSPPIDLV (146 aa). Residues 620 to 650 are compositionally biased toward low complexity; the sequence is DSYSSSPDSTPMGSIESLSSHSSEQNSTTKS. A compositionally biased stretch (polar residues) spans 667-686; sequence TPSSSNGQKSLGLWTTSPES. The residue at position 683 (serine 683) is a Phosphoserine. Over residues 687 to 697 the composition is skewed to basic and acidic residues; sequence SSREDATKTDA. Positions 700-711 are enriched in polar residues; it reads DCQSVASVTSPG. Phosphoserine is present on residues serine 740, serine 753, serine 756, and serine 811. The span at 749 to 762 shows a compositional bias: polar residues; sequence SYSGSIQSLTSVGS. Residues 749–777 are disordered; that stretch reads SYSGSIQSLTSVGSKETPKASPNPDLPPK. The region spanning 816 to 874 is the SH3 domain; that stretch reads SSGRQAKAMYSCKAEHSHELSFPQGAIFSNVYPSVEPGWLKATYEGKTGLVPENYVVFL. Phosphotyrosine is present on tyrosine 870.

As to expression, highly and selectively expressed in smooth muscle cells.

In terms of biological role, may influence blood pressure by functioning as a GTPase-activating protein for RHOA in vascular smooth muscle. This Homo sapiens (Human) protein is Rho GTPase-activating protein 42.